A 342-amino-acid polypeptide reads, in one-letter code: GTPase Obg (342 aa).

Positions 1 to 159 constitute an Obg domain; sequence MQFIDRAEIE…RHLRLELKLL (159 aa). One can recognise an OBG-type G domain in the interval 160 to 328; the sequence is AEVGIIGLPN…LLAKVWQQLE (169 aa). GTP is bound by residues 166–173, 191–195, 213–216, 280–283, and 309–311; these read GLPNAGKS, FTTLI, DIPG, NKID, and SAV. Ser173 and Thr193 together coordinate Mg(2+).

This sequence belongs to the TRAFAC class OBG-HflX-like GTPase superfamily. OBG GTPase family. Monomer. Mg(2+) is required as a cofactor.

Its subcellular location is the cytoplasm. Functionally, an essential GTPase which binds GTP, GDP and possibly (p)ppGpp with moderate affinity, with high nucleotide exchange rates and a fairly low GTP hydrolysis rate. Plays a role in control of the cell cycle, stress response, ribosome biogenesis and in those bacteria that undergo differentiation, in morphogenesis control. This Microcystis aeruginosa (strain NIES-843 / IAM M-2473) protein is GTPase Obg.